The following is a 281-amino-acid chain: Probable endonuclease 4 (281 aa).

9 residues coordinate Zn(2+): His-69, His-109, Glu-145, Asp-179, His-182, His-216, Asp-229, His-231, and Glu-261.

The protein belongs to the AP endonuclease 2 family. Zn(2+) is required as a cofactor.

It catalyses the reaction Endonucleolytic cleavage to 5'-phosphooligonucleotide end-products.. Its function is as follows. Endonuclease IV plays a role in DNA repair. It cleaves phosphodiester bonds at apurinic or apyrimidinic (AP) sites, generating a 3'-hydroxyl group and a 5'-terminal sugar phosphate. In Chlorobaculum tepidum (strain ATCC 49652 / DSM 12025 / NBRC 103806 / TLS) (Chlorobium tepidum), this protein is Probable endonuclease 4.